An 836-amino-acid polypeptide reads, in one-letter code: Protein translocase subunit SecA (836 aa).

ATP is bound by residues Q85, G103–T107, and D492. Zn(2+) is bound by residues C820, C822, C831, and C832.

This sequence belongs to the SecA family. Monomer and homodimer. Part of the essential Sec protein translocation apparatus which comprises SecA, SecYEG and auxiliary proteins SecDF. Other proteins may also be involved. Zn(2+) is required as a cofactor.

The protein resides in the cell membrane. It localises to the cytoplasm. It catalyses the reaction ATP + H2O + cellular proteinSide 1 = ADP + phosphate + cellular proteinSide 2.. Functionally, part of the Sec protein translocase complex. Interacts with the SecYEG preprotein conducting channel. Has a central role in coupling the hydrolysis of ATP to the transfer of proteins into and across the cell membrane, serving as an ATP-driven molecular motor driving the stepwise translocation of polypeptide chains across the membrane. In Clostridium botulinum (strain Eklund 17B / Type B), this protein is Protein translocase subunit SecA.